Here is a 1433-residue protein sequence, read N- to C-terminus: Probable ATP-dependent RNA helicase spindle-E (1433 aa).

One can recognise a Helicase ATP-binding domain in the interval 126–294 (INAINENPVV…FANERSAPPV (169 aa)). 139 to 146 (GETGCGKT) contributes to the ATP binding site. Residues 240–243 (DEVH) carry the DEAH box motif. Residues 355-526 (TGKSYNQSLR…NCVLKAKELK (172 aa)) form the Helicase C-terminal domain. One can recognise a Tudor domain in the interval 935–998 (AGAITKGLML…RLMSQDLLRH (64 aa)).

The protein belongs to the DEAD box helicase family. DEAH subfamily.

The protein resides in the cytoplasm. It carries out the reaction ATP + H2O = ADP + phosphate + H(+). Its function is as follows. Probable ATP-binding RNA helicase which plays a central role during spermatogenesis and oogenesis by repressing transposable elements and preventing their mobilization, which is essential for the germline integrity. Acts via the piRNA metabolic process, which mediates the repression of transposable elements during meiosis by forming complexes composed of piRNAs and Piwi and govern the methylation and subsequent repression of transposons. Involved in the repression of LTR retrotransposon copia. Also involved in telomere regulation by repressing specialized telomeric retroelements HeT-A, TAHRE, and TART; Drosophila telomeres being maintained by transposition of specialized telomeric retroelements. Involved in telomeric trans-silencing, a repression mechanism by which a transposon or a transgene inserted in subtelomeric heterochromatin has the capacity to repress in trans in the female germline, a homologous transposon, or transgene located in euchromatin. Involved in the repression of testis-expressed Stellate genes by the homologous Su(Ste) repeats. Required for anteroposterior and dorsoventral axis formation during oogenesis. This Drosophila pseudoobscura pseudoobscura (Fruit fly) protein is Probable ATP-dependent RNA helicase spindle-E (spn-E).